We begin with the raw amino-acid sequence, 333 residues long: Fructose-1,6-bisphosphatase class 1 (333 aa).

Mg(2+) is bound by residues glutamate 92, aspartate 113, leucine 115, and aspartate 116. Substrate-binding positions include 116–119, asparagine 209, tyrosine 242, and lysine 272; that span reads DGSS. Glutamate 278 is a binding site for Mg(2+).

It belongs to the FBPase class 1 family. As to quaternary structure, homotetramer. The cofactor is Mg(2+).

The protein resides in the cytoplasm. It catalyses the reaction beta-D-fructose 1,6-bisphosphate + H2O = beta-D-fructose 6-phosphate + phosphate. It participates in carbohydrate biosynthesis; Calvin cycle. The protein is Fructose-1,6-bisphosphatase class 1 of Chlorobium chlorochromatii (strain CaD3).